A 142-amino-acid polypeptide reads, in one-letter code: Hemoglobin subunit alpha-A (142 aa).

The region spanning 2–142 is the Globin domain; that stretch reads VLSANDKTNV…VGNVLTAKYR (141 aa). His-59 lines the O2 pocket. Position 88 (His-88) interacts with heme b.

Belongs to the globin family. As to quaternary structure, heterotetramer of two alpha chains and two beta chains. As to expression, red blood cells.

Its function is as follows. Involved in oxygen transport from the lung to the various peripheral tissues. The protein is Hemoglobin subunit alpha-A (HBAA) of Aegypius monachus (Cinereous vulture).